Consider the following 110-residue polypeptide: Progonadoliberin-2 (110 aa).

The first 26 residues, 1–26 (MASIGQGLVLLLLLLLLTAQPGPLKA), serve as a signal peptide directing secretion. The segment at 25 to 85 (KAQHWSHGWY…KALAPPEDTV (61 aa)) is disordered. The residue at position 36 (Gly-36) is a Glycine amide.

Belongs to the GnRH family. In terms of tissue distribution, midbrain.

It localises to the secreted. Functionally, stimulates the secretion of gonadotropins; it stimulates the secretion of both luteinizing and follicle-stimulating hormones. The protein is Progonadoliberin-2 (GNRH2) of Suncus murinus (Asian house shrew).